Consider the following 163-residue polypeptide: NADH-quinone oxidoreductase subunit I (163 aa).

4Fe-4S ferredoxin-type domains follow at residues 53 to 83 (LRRY…IEAG) and 94 to 123 (TRYD…EGPN). Residues Cys63, Cys66, Cys69, Cys73, Cys103, Cys106, Cys109, and Cys113 each contribute to the [4Fe-4S] cluster site.

This sequence belongs to the complex I 23 kDa subunit family. In terms of assembly, NDH-1 is composed of 14 different subunits. Subunits NuoA, H, J, K, L, M, N constitute the membrane sector of the complex. Requires [4Fe-4S] cluster as cofactor.

The protein localises to the cell inner membrane. The enzyme catalyses a quinone + NADH + 5 H(+)(in) = a quinol + NAD(+) + 4 H(+)(out). NDH-1 shuttles electrons from NADH, via FMN and iron-sulfur (Fe-S) centers, to quinones in the respiratory chain. The immediate electron acceptor for the enzyme in this species is believed to be ubiquinone. Couples the redox reaction to proton translocation (for every two electrons transferred, four hydrogen ions are translocated across the cytoplasmic membrane), and thus conserves the redox energy in a proton gradient. The chain is NADH-quinone oxidoreductase subunit I from Parvibaculum lavamentivorans (strain DS-1 / DSM 13023 / NCIMB 13966).